Consider the following 628-residue polypeptide: MFCIIRAQLLLLLHLLVLALLLVGTVCNAHPQHGHPSELEPLALKRGGSPRDDGNTLAPRCRCIPGEACWPSTQIWDSFNRTIGGSLIKTAPLAESCYPGPKKNTRKCAVVSRKWTDQDFQTDSPVGRTYPYNITCAPVNYFAGQRPTTCSLGQLPVYAIDARTRQSVAQGLRFAKDNNLRVTVVSTGHDLLGRADGYGSLEIWLRHHRNEIRFERQYMATDGCRESGWTGSAIDIDGAYQWRDVHIKARANNVIVVGGGSVSPGAIGGWPSGGGHGPASRNYGLGADQILEAEVMLADGSVVLANHCQHTDLFRALRGGGPGFGVVLKTKIKAYPNVASVSVHHLTITPIRQTPNNSDLLDAVAVLMQAYPKLSDDGYAGYAFWLRNCKSFFIGSAKSGYRHGIWMIGKTTEEAEHSFAPVREALDKFKSKLTISESYMTYNDYWSFYTSESGLYESVGTTSVLTSRLIDRPAVEDYNRVREAVEVIGGKPEDYATNVMMLVSNGQVFADAADKSSGLNPAWRVSPYVVISSRGIPMVVDQASRKEVADDITYVKGAALQKLAPNTGGYMNEGDRNDPNYIKNFFGTIYPTHLATKKKYDPWGLFYCPTCVGAELFEETSRGELCRR.

The signal sequence occupies residues 1–29 (MFCIIRAQLLLLLHLLVLALLLVGTVCNA). Residues 34–53 (GHPSELEPLALKRGGSPRDD) form a disordered region. 2 N-linked (GlcNAc...) asparagine glycosylation sites follow: N80 and N133. The FAD-binding PCMH-type domain occupies 152–337 (LGQLPVYAID…LKTKIKAYPN (186 aa)). An N-linked (GlcNAc...) asparagine glycan is attached at N356.

The protein belongs to the oxygen-dependent FAD-linked oxidoreductase family.

The protein operates within secondary metabolite biosynthesis. FAD-linked oxidoreductase; part of the gene cluster that mediates the biosynthesis of hypothemycin, a resorcylic acid lactone (RAL) that irreversibly inhibits a subset of protein kinases with a conserved cysteine in the ATP binding site such as human ERK2. The first step is performed by both PKSs hmp3 and hmp8 and leads to the production of 7',8'-dehydrozearalenol (DHZ). The highly reducing PKS hpm8 synthesizes the reduced hexaketide (7S,11S,2E,8E)-7,11-dihydroxy-dodeca-2,8-dienoate, which is transferred downstream to the non-reducing PKS hpm3. Hpm3 then extends the reduced hexaketide to a nonaketide, after which regioselective cyclization and macrolactonization affords DHZ. The next step is the conversion of DHZ into aigialomycin C and is performed by the O-methyltransferase hmp5, the FAD-binding monooxygenase hmp7, and the cytochrome P450 monooxygenase hmp1. The wide substrate tolerance of the hmp5 and hmp7 implies that the reactions from DHZ to aigialomycin C can occur in any order. The steps from aigialomycin C to hypothemycin are less well established. The FAD-linked oxidoreductase hmp9 presumably catalyzes oxidation of the C-6' hydroxyl to a ketone. The timing of this oxidation is important, since the resulting enone functional group is a Michael acceptor that can react spontaneously with glutathione, an abundant metabolite in fungal cells. The glutathione S-transferase hmp2 catalyzes cis-trans isomerization of the 7',8' double bond with equilibrium favoring the trans isomer. The hpm6-encoded transporter might preferentially pump hypothemycin out of the cell relative to the trans isomer aigialomycin A. The cis-to-trans isomerization may be coupled with C-4' hydroxylation, since all known hypothemycin analogs containing the enone functional group also have hydroxyl groups at both C-4' and C-5'. The sequence is that of FAD-linked oxidoreductase hmp9 from Hypomyces subiculosus (Nectria subiculosa).